A 32-amino-acid chain; its full sequence is Fimbrin sef21 (32 aa).

The protein resides in the fimbrium. This chain is Fimbrin sef21, found in Salmonella enteritidis.